Here is a 274-residue protein sequence, read N- to C-terminus: Large ribosomal subunit protein uL2 (274 aa).

Disordered stretches follow at residues 37–59 and 222–262; these read KAKN…GGHK and GAAM…RTNK. Basic residues predominate over residues 50-59; sequence TTRHKGGGHK.

Belongs to the universal ribosomal protein uL2 family. As to quaternary structure, part of the 50S ribosomal subunit. Forms a bridge to the 30S subunit in the 70S ribosome.

Functionally, one of the primary rRNA binding proteins. Required for association of the 30S and 50S subunits to form the 70S ribosome, for tRNA binding and peptide bond formation. It has been suggested to have peptidyltransferase activity; this is somewhat controversial. Makes several contacts with the 16S rRNA in the 70S ribosome. In Alcanivorax borkumensis (strain ATCC 700651 / DSM 11573 / NCIMB 13689 / SK2), this protein is Large ribosomal subunit protein uL2.